Consider the following 32-residue polypeptide: MSDIN-like toxin proprotein 2 (32 aa).

Residues 1 to 10 (MSDINATRVP) constitute a propeptide that is removed on maturation. The segment at residues 11-17 (AWLAECP) is a cross-link (cyclopeptide (Ala-Pro)). The propeptide occupies 18-32 (CVGDDISHLLTRGEK).

This sequence belongs to the MSDIN fungal toxin family. Processed by the macrocyclase-peptidase enzyme POPB to yield a toxic cyclic heptapeptide. POPB first removes 10 residues from the N-terminus. Conformational trapping of the remaining peptide forces the enzyme to release this intermediate rather than proceed to macrocyclization. The enzyme rebinds the remaining peptide in a different conformation and catalyzes macrocyclization of the N-terminal 7 residues.

Its function is as follows. Probable toxin that belongs to the MSDIN-like toxin family responsible for a large number of food poisoning cases and deaths. This Amanita rimosa protein is MSDIN-like toxin proprotein 2.